Reading from the N-terminus, the 496-residue chain is Aspartyl/glutamyl-tRNA(Asn/Gln) amidotransferase subunit B (496 aa).

This sequence belongs to the GatB/GatE family. GatB subfamily. Heterotrimer of A, B and C subunits.

It carries out the reaction L-glutamyl-tRNA(Gln) + L-glutamine + ATP + H2O = L-glutaminyl-tRNA(Gln) + L-glutamate + ADP + phosphate + H(+). The catalysed reaction is L-aspartyl-tRNA(Asn) + L-glutamine + ATP + H2O = L-asparaginyl-tRNA(Asn) + L-glutamate + ADP + phosphate + 2 H(+). Its function is as follows. Allows the formation of correctly charged Asn-tRNA(Asn) or Gln-tRNA(Gln) through the transamidation of misacylated Asp-tRNA(Asn) or Glu-tRNA(Gln) in organisms which lack either or both of asparaginyl-tRNA or glutaminyl-tRNA synthetases. The reaction takes place in the presence of glutamine and ATP through an activated phospho-Asp-tRNA(Asn) or phospho-Glu-tRNA(Gln). In Nitrosospira multiformis (strain ATCC 25196 / NCIMB 11849 / C 71), this protein is Aspartyl/glutamyl-tRNA(Asn/Gln) amidotransferase subunit B.